A 396-amino-acid polypeptide reads, in one-letter code: L-lactate dehydrogenase (396 aa).

Positions 1–380 constitute an FMN hydroxy acid dehydrogenase domain; the sequence is MIISAASDYR…SGDSLVQELG (380 aa). Y24 is a substrate binding site. Residues S106 and Q127 each coordinate FMN. Y129 is a substrate binding site. T155 is an FMN binding site. A substrate-binding site is contributed by R164. Residue K251 participates in FMN binding. Catalysis depends on H275, which acts as the Proton acceptor. R278 contacts substrate. Residue 306–330 coordinates FMN; sequence DSGIRNGLDVVRMIALGADTVLLGR.

Belongs to the FMN-dependent alpha-hydroxy acid dehydrogenase family. FMN is required as a cofactor.

Its subcellular location is the cell inner membrane. It carries out the reaction (S)-lactate + A = pyruvate + AH2. In terms of biological role, catalyzes the conversion of L-lactate to pyruvate. Is coupled to the respiratory chain. The chain is L-lactate dehydrogenase from Salmonella arizonae (strain ATCC BAA-731 / CDC346-86 / RSK2980).